Here is a 452-residue protein sequence, read N- to C-terminus: Keratin, type II cytoskeletal 80 (452 aa).

The interval 1–82 is head; the sequence is MAYRSCVVGF…DPAVQQQKNQ (82 aa). Residue Ser45 is modified to Phosphoserine. The segment at 82-118 is coil 1A; the sequence is QEKEEMKVLNDKFASLIGKVQALEQRNQLLETRWGFL. The 312-residue stretch at 83-394 folds into the IF rod domain; the sequence is EKEEMKVLND…KLMEGEESRM (312 aa). The linker 1 stretch occupies residues 119 to 135; that stretch reads QGQGSATFDLSHHYETF. The coil 1B stretch occupies residues 136–227; it reads QGRLQEELRK…TVYEQELKDL (92 aa). A linker 12 region spans residues 228 to 251; the sequence is TAQVKDVSVTVGLDSRCHIDLSGI. The coil 2 stretch occupies residues 252-390; it reads VEEVKAQYDA…ATYHKLMEGE (139 aa). Positions 391-452 are tail; it reads ESRMDLPSTT…YLSQESEASE (62 aa). 2 stretches are compositionally biased toward polar residues: residues 411-421 and 443-452; these read TTASKSGLSKT and YLSQESEASE. The disordered stretch occupies residues 411-452; that stretch reads TTASKSGLSKTPSRKKKNRGGPVIKITEMSEKYLSQESEASE.

It belongs to the intermediate filament family. As to quaternary structure, heterotetramer of two type I and two type II keratins.

This Rattus norvegicus (Rat) protein is Keratin, type II cytoskeletal 80 (Krt80).